A 201-amino-acid chain; its full sequence is MSRYRGPRFKKIRRLGALPGLTSKRPRSGSDLRNQSRSGKRSQYRIRLEEKQKLRFHYGLTERQLLRYVRIAGKAKGSTGQVLLQLLEMRLDNILFRLGMASTIPGARQLVNHRHILVNGRLVDIPSYRCKPGDFVTTREKERSRALIQNHMNSSPNEELPKHLTLYSLQYKGLVNQIIDSKWIGLKINELLVVEYYSRQT.

The segment at 15 to 43 (LGALPGLTSKRPRSGSDLRNQSRSGKRSQ) is disordered. Positions 89–150 (MRLDNILFRL…KERSRALIQN (62 aa)) constitute an S4 RNA-binding domain.

It belongs to the universal ribosomal protein uS4 family. Part of the 30S ribosomal subunit. Contacts protein S5. The interaction surface between S4 and S5 is involved in control of translational fidelity.

The protein localises to the plastid. Its subcellular location is the chloroplast. Functionally, one of the primary rRNA binding proteins, it binds directly to 16S rRNA where it nucleates assembly of the body of the 30S subunit. With S5 and S12 plays an important role in translational accuracy. The polypeptide is Small ribosomal subunit protein uS4c (rps4) (Amborella trichopoda).